A 585-amino-acid polypeptide reads, in one-letter code: Proline--tRNA ligase (585 aa).

Belongs to the class-II aminoacyl-tRNA synthetase family. ProS type 1 subfamily. In terms of assembly, homodimer.

It localises to the cytoplasm. It catalyses the reaction tRNA(Pro) + L-proline + ATP = L-prolyl-tRNA(Pro) + AMP + diphosphate. In terms of biological role, catalyzes the attachment of proline to tRNA(Pro) in a two-step reaction: proline is first activated by ATP to form Pro-AMP and then transferred to the acceptor end of tRNA(Pro). As ProRS can inadvertently accommodate and process non-cognate amino acids such as alanine and cysteine, to avoid such errors it has two additional distinct editing activities against alanine. One activity is designated as 'pretransfer' editing and involves the tRNA(Pro)-independent hydrolysis of activated Ala-AMP. The other activity is designated 'posttransfer' editing and involves deacylation of mischarged Ala-tRNA(Pro). The misacylated Cys-tRNA(Pro) is not edited by ProRS. The protein is Proline--tRNA ligase of Mycolicibacterium vanbaalenii (strain DSM 7251 / JCM 13017 / BCRC 16820 / KCTC 9966 / NRRL B-24157 / PYR-1) (Mycobacterium vanbaalenii).